Reading from the N-terminus, the 178-residue chain is Interleukin-10 (178 aa).

Residues 1–18 form the signal peptide; it reads MHSSALLCCLVLLTGVRA. Disulfide bonds link Cys30–Cys126 and Cys80–Cys132. A glycan (N-linked (GlcNAc...) asparagine) is linked at Asn134.

It belongs to the IL-10 family. As to quaternary structure, homodimer. Interacts with IL10RA and IL10RB.

The protein resides in the secreted. In terms of biological role, major immune regulatory cytokine that acts on many cells of the immune system where it has profound anti-inflammatory functions, limiting excessive tissue disruption caused by inflammation. Mechanistically, IL10 binds to its heterotetrameric receptor comprising IL10RA and IL10RB leading to JAK1 and STAT2-mediated phosphorylation of STAT3. In turn, STAT3 translocates to the nucleus where it drives expression of anti-inflammatory mediators. Targets antigen-presenting cells (APCs) such as macrophages and monocytes and inhibits their release of pro-inflammatory cytokines including granulocyte-macrophage colony-stimulating factor /GM-CSF, granulocyte colony-stimulating factor/G-CSF, IL-1 alpha, IL-1 beta, IL-6, IL-8 and TNF-alpha. Also interferes with antigen presentation by reducing the expression of MHC-class II and co-stimulatory molecules, thereby inhibiting their ability to induce T cell activation. In addition, controls the inflammatory response of macrophages by reprogramming essential metabolic pathways including mTOR signaling. This chain is Interleukin-10 (IL10), found in Pan troglodytes (Chimpanzee).